The chain runs to 317 residues: tRNA pseudouridine synthase B (317 aa).

Asp-47 serves as the catalytic Nucleophile.

The protein belongs to the pseudouridine synthase TruB family. Type 1 subfamily.

It catalyses the reaction uridine(55) in tRNA = pseudouridine(55) in tRNA. In terms of biological role, responsible for synthesis of pseudouridine from uracil-55 in the psi GC loop of transfer RNAs. In Shewanella sp. (strain MR-7), this protein is tRNA pseudouridine synthase B.